Consider the following 525-residue polypeptide: Zinc finger C2HC domain-containing protein 1C (525 aa).

Residues 23 to 34 (AHGLHSAKHDPY) show a composition bias toward basic and acidic residues. Disordered stretches follow at residues 23 to 48 (AHGLHSAKHDPYEQSDSPQRSSMGHL), 85 to 107 (CPHSAGISQQGSGNNAQGQGKGL), and 145 to 171 (VHRKSHSTSETGIDGDQNGYPRLPDSS). The span at 36–48 (QSDSPQRSSMGHL) shows a compositional bias: polar residues. The span at 90–102 (GISQQGSGNNAQG) shows a compositional bias: low complexity. The stretch at 207–252 (TQIQRLEAAGESLQKEIRRKEILLREKLKKTEEGLRRIQREKKQAI) forms a coiled coil. Disordered regions lie at residues 292–316 (SRNRGEDQTCEQAQENSSPLQLSDY), 330–349 (NNKIRDRDSGPSAGTFSQPA), and 356–379 (LQASSLSGTPGSSGSSSSTEEQEL). Over residues 301–312 (CEQAQENSSPLQ) the composition is skewed to polar residues. Residues 359–373 (SSLSGTPGSSGSSSS) are compositionally biased toward low complexity. 2 consecutive C2HC/C3H-type zinc fingers follow at residues 378–407 (ELGKCSHCGRSFLSLRLQRHSTVCGKMQGS) and 487–516 (DYVQCPHCSRHFAPKVAERHIPKCKTIKNR). Zn(2+) is bound by residues C382, C385, H397, C401, C491, C494, H506, and C510.

This sequence belongs to the ZC2HC1 family. The cofactor is Zn(2+).

In Rattus norvegicus (Rat), this protein is Zinc finger C2HC domain-containing protein 1C (Zc2hc1c).